The sequence spans 971 residues: MGTVNGEYEDFDAANRRAEVIDWLGGLLPEFDLPLDSSDEELRDYLINGEALCYVADKLMPGVLEGTWGGYASDQRSNVKKFLSVVAEMGLPGFGVKDLEEGSMSSIVECLLALKDNVATQLGGHISNSTAKTPIRRKLELRETDGPVLSVATPGKRYPKSQQRSPLLSGQKINEVVQFKHGTYTDLPAAKISEMLHSNSLDNAPTQSLLRVVNGILDESIERKRGEIPHRVVHLLRNVIQEIEHRIGIQADHIRNQNSIIKTREDKYRSKIKALETLVNGTNEENEMAINRLEVVKVEKSKIDEKRKLGEQDMIRLIREKENAENIIASLHQEMQVMNRMHEQFREQMETKARQMEEHLTLRAKEAEFCLMQSKKKVEEVEATSQLKSQLWSKKANIFQSFMNNQKLSIKDIKISSQSIKQEMYALQMTWRDEISNIGHDLKGLVDAAENYHKVLAENQKLFNEVQELKGNIRVYCRVRPFLPGQDGKLTAIDYIGENGEILIANPSKQGKEGYRMFKFNKVFGTHSSQAEVFSDIQPLIRSVLDGFNVCIFAYGQTGSGKTYTMSGPGTSREDWGVNYRALNDLFDISLSRKNAFSYEVGVQMVEIYNEQVRDLLSNDIAQKRLGIWSTSQPNGLVVPDASLHPVKSTSDVLDLMEIGQSNRAVGSTALNERSSRSHSILTVHVRGLDVKNGSTSRGCLHLIDLAGSERVERSEATGDRLKEAQHINKSLSALGDVIFSLAQKNAHVPYRNSKLTQVLQSSLGGQAKTLMFVQINPDIESYSETISTLKFAERVSGVELGAARSNREGKDIKELLEQVASLKDTIARKDMEIEQLQLLKSKSPNSMTDRNGSNLLRQSTSSTGLSSLPVASQQNQQLSGSVEAEAEDNASDDGCSVGETEYSPAGASETSAERAHKAPSRITRFFLTKNGQPSTSRPKPREVVPKTQGSMRPGTAQATGGSLAKPSKRR.

The Calponin-homology (CH) domain occupies A14–A119. Residues I272–E357 adopt a coiled-coil conformation. The Kinesin motor domain maps to N472 to V799. G556–T563 lines the ATP pocket. The stretch at E809–S844 forms a coiled coil. Polar residues predominate over residues L839–G881. Residues L839–R971 form a disordered region.

This sequence belongs to the TRAFAC class myosin-kinesin ATPase superfamily. Kinesin family. KIN-14 subfamily.

This is Kinesin-like protein KIN-14C from Oryza sativa subsp. japonica (Rice).